A 283-amino-acid polypeptide reads, in one-letter code: Nucleoid occlusion protein (283 aa).

Positions 148–167 (EALAQRLGKGQSTIANKLRL) form a DNA-binding region, H-T-H motif.

The protein belongs to the ParB family.

The protein localises to the cytoplasm. Its subcellular location is the nucleoid. Functionally, effects nucleoid occlusion by binding relatively nonspecifically to DNA and preventing the assembly of the division machinery in the vicinity of the nucleoid, especially under conditions that disturb the cell cycle. It helps to coordinate cell division and chromosome segregation by preventing the formation of the Z ring through the nucleoid, which would cause chromosome breakage. In Bacillus licheniformis (strain ATCC 14580 / DSM 13 / JCM 2505 / CCUG 7422 / NBRC 12200 / NCIMB 9375 / NCTC 10341 / NRRL NRS-1264 / Gibson 46), this protein is Nucleoid occlusion protein.